The following is a 263-amino-acid chain: Endonuclease 8 (263 aa).

The active-site Schiff-base intermediate with DNA is Pro2. Glu3 serves as the catalytic Proton donor. Lys53 (proton donor; for beta-elimination activity) is an active-site residue. Gln70, Arg125, and Asn169 together coordinate DNA. An FPG-type zinc finger spans residues 229–263 (KVFHRDGEACERCGGIIEKTTLSSRPFYWCPHCQK). The active-site Proton donor; for delta-elimination activity is the Arg253.

This sequence belongs to the FPG family. The cofactor is Zn(2+).

The enzyme catalyses 2'-deoxyribonucleotide-(2'-deoxyribose 5'-phosphate)-2'-deoxyribonucleotide-DNA = a 3'-end 2'-deoxyribonucleotide-(2,3-dehydro-2,3-deoxyribose 5'-phosphate)-DNA + a 5'-end 5'-phospho-2'-deoxyribonucleoside-DNA + H(+). Functionally, involved in base excision repair of DNA damaged by oxidation or by mutagenic agents. Acts as a DNA glycosylase that recognizes and removes damaged bases. Has a preference for oxidized pyrimidines, such as thymine glycol, 5,6-dihydrouracil and 5,6-dihydrothymine. Has AP (apurinic/apyrimidinic) lyase activity and introduces nicks in the DNA strand. Cleaves the DNA backbone by beta-delta elimination to generate a single-strand break at the site of the removed base with both 3'- and 5'-phosphates. This Salmonella dublin (strain CT_02021853) protein is Endonuclease 8.